The chain runs to 84 residues: Mu-conotoxin-like Cal 12.2d (84 aa).

A signal peptide spans 1-19 (MKLTCVLVVLLLVLPFGDL). The propeptide occupies 20-42 (ITTSNTEDNKRGATPWQNSLKAR). Position 72 is a 6'-bromotryptophan (Trp-72). Residue Pro-77 is modified to 4-hydroxyproline. Position 81 is a 6'-bromotryptophan (Trp-81).

The protein belongs to the conotoxin O1 superfamily. In terms of processing, contains 4 disulfide bonds. In terms of tissue distribution, expressed by the venom duct.

The protein localises to the secreted. Its function is as follows. Mu-conotoxins block voltage-gated sodium channels. This toxin reversibly blocks voltage-gated sodium channel in cephalopods, with no alteration in the voltage dependence of sodium conductance or on the kinetics of inactivation. This Californiconus californicus (California cone) protein is Mu-conotoxin-like Cal 12.2d.